A 352-amino-acid chain; its full sequence is Transcription factor RSL2 (352 aa).

The span at Ser160–Gly169 shows a compositional bias: polar residues. The interval Ser160 to Gln277 is disordered. The segment covering Lys183 to Gln192 has biased composition (basic residues). Positions Ser223–Cys232 are enriched in polar residues. The interval Ala272–Arg285 is basic motif. Residues Ala272–Leu321 enclose the bHLH domain. The interval Glu286–Leu321 is helix-loop-helix motif.

As to quaternary structure, homodimer. Expressed in roots. Expressed in root epidermal hair cells.

It is found in the nucleus. Transcription factor involved in the regulation of root hair elongation. Does not seem to be a direct transcriptional target of RHD6 and RSL1. Involved in the regulation of root hair elongation in response to low phosphate. The polypeptide is Transcription factor RSL2 (Arabidopsis thaliana (Mouse-ear cress)).